An 80-amino-acid chain; its full sequence is uncharacterized protein (80 aa).

The chain crosses the membrane as a helical span at residues 10–29 (FVAREYPLVVVPFIYFVLFL).

Its subcellular location is the membrane. This is an uncharacterized protein from Saccharomyces cerevisiae (strain ATCC 204508 / S288c) (Baker's yeast).